A 219-amino-acid chain; its full sequence is Thiamine-phosphate synthase (219 aa).

4-amino-2-methyl-5-(diphosphooxymethyl)pyrimidine is bound by residues 44–48 (QFREK) and N79. Mg(2+) is bound by residues D80 and D99. Residue S117 coordinates 4-amino-2-methyl-5-(diphosphooxymethyl)pyrimidine. Residue 143 to 145 (TST) coordinates 2-[(2R,5Z)-2-carboxy-4-methylthiazol-5(2H)-ylidene]ethyl phosphate. Residue K146 coordinates 4-amino-2-methyl-5-(diphosphooxymethyl)pyrimidine. 2-[(2R,5Z)-2-carboxy-4-methylthiazol-5(2H)-ylidene]ethyl phosphate-binding positions include G175 and 195 to 196 (IS).

This sequence belongs to the thiamine-phosphate synthase family. It depends on Mg(2+) as a cofactor.

It carries out the reaction 2-[(2R,5Z)-2-carboxy-4-methylthiazol-5(2H)-ylidene]ethyl phosphate + 4-amino-2-methyl-5-(diphosphooxymethyl)pyrimidine + 2 H(+) = thiamine phosphate + CO2 + diphosphate. The catalysed reaction is 2-(2-carboxy-4-methylthiazol-5-yl)ethyl phosphate + 4-amino-2-methyl-5-(diphosphooxymethyl)pyrimidine + 2 H(+) = thiamine phosphate + CO2 + diphosphate. It catalyses the reaction 4-methyl-5-(2-phosphooxyethyl)-thiazole + 4-amino-2-methyl-5-(diphosphooxymethyl)pyrimidine + H(+) = thiamine phosphate + diphosphate. It functions in the pathway cofactor biosynthesis; thiamine diphosphate biosynthesis; thiamine phosphate from 4-amino-2-methyl-5-diphosphomethylpyrimidine and 4-methyl-5-(2-phosphoethyl)-thiazole: step 1/1. Functionally, condenses 4-methyl-5-(beta-hydroxyethyl)thiazole monophosphate (THZ-P) and 2-methyl-4-amino-5-hydroxymethyl pyrimidine pyrophosphate (HMP-PP) to form thiamine monophosphate (TMP). This chain is Thiamine-phosphate synthase, found in Bacillus cereus (strain ATCC 14579 / DSM 31 / CCUG 7414 / JCM 2152 / NBRC 15305 / NCIMB 9373 / NCTC 2599 / NRRL B-3711).